The chain runs to 201 residues: MSKPRVAIIIYSLYHHVYTLAESAKIGIEAAGVKPDLFQVPETLTPEILKLVKAPPKPDIPIAEPKILNNYDAFLFGIPTRFGNMPAQWKGFWDGTGGQWARGDLRGKYAGVFVSTGTPGGGQETTVINTLSTLAHHGIVYVPFGYGSPRLADLNEVHGGSPWGAGTFAGADGSREVTELEKSIAQQQGEDFIKTITQFKQ.

One can recognise a Flavodoxin-like domain in the interval 6 to 192 (VAIIIYSLYH…SIAQQQGEDF (187 aa)). Residues 12–16 (SLYHH) and 112–164 (VFVS…SPWG) each bind FMN.

This sequence belongs to the WrbA family. FMN serves as cofactor.

It is found in the cell membrane. The enzyme catalyses a quinone + NADH + H(+) = a quinol + NAD(+). It carries out the reaction a quinone + NADPH + H(+) = a quinol + NADP(+). Its function is as follows. Flavodoxin-like protein (FLP) that plays a role in cell wall integrity, oxidative stress protection and virulence. FLPs act as NAD(P)H quinone oxidoreductases. Reduces ubiquinone (coenzyme Q), enabling it to serve as an antioxidant in the membrane. This is NAD(P)H quinone oxidoreductase PST2 from Candida albicans (strain SC5314 / ATCC MYA-2876) (Yeast).